A 308-amino-acid chain; its full sequence is Lipoyl synthase 2 (308 aa).

The [4Fe-4S] cluster site is built by C49, C54, C60, C75, C79, C82, and S300. Positions 61–289 constitute a Radical SAM core domain; it reads YASGTATFLL…KRIAEGLGFK (229 aa).

It belongs to the radical SAM superfamily. Lipoyl synthase family. Requires [4Fe-4S] cluster as cofactor.

It localises to the cytoplasm. It carries out the reaction [[Fe-S] cluster scaffold protein carrying a second [4Fe-4S](2+) cluster] + N(6)-octanoyl-L-lysyl-[protein] + 2 oxidized [2Fe-2S]-[ferredoxin] + 2 S-adenosyl-L-methionine + 4 H(+) = [[Fe-S] cluster scaffold protein] + N(6)-[(R)-dihydrolipoyl]-L-lysyl-[protein] + 4 Fe(3+) + 2 hydrogen sulfide + 2 5'-deoxyadenosine + 2 L-methionine + 2 reduced [2Fe-2S]-[ferredoxin]. The protein operates within protein modification; protein lipoylation via endogenous pathway; protein N(6)-(lipoyl)lysine from octanoyl-[acyl-carrier-protein]: step 2/2. Functionally, catalyzes the radical-mediated insertion of two sulfur atoms into the C-6 and C-8 positions of the octanoyl moiety bound to the lipoyl domains of lipoate-dependent enzymes, thereby converting the octanoylated domains into lipoylated derivatives. This Prochlorococcus marinus (strain SARG / CCMP1375 / SS120) protein is Lipoyl synthase 2.